Here is a 78-residue protein sequence, read N- to C-terminus: Rubredoxin (78 aa).

Residues 23–74 form the Rubredoxin-like domain; that stretch reads DARLECKICWWEYDPEVGDPVWQIAPGTSFSALPAHWRCPNCDGEAEQFMVL. Fe cation contacts are provided by cysteine 28, cysteine 31, cysteine 61, and cysteine 64.

It belongs to the rubredoxin family. Requires Fe(3+) as cofactor.

Rubredoxin is a small nonheme, iron protein lacking acid-labile sulfide. Its single Fe, chelated to 4 Cys, functions as an electron acceptor and may also stabilize the conformation of the molecule. Could be involved in hydrogenase-linked redox processes. The protein is Rubredoxin (hoxR) of Cupriavidus necator (strain ATCC 17699 / DSM 428 / KCTC 22496 / NCIMB 10442 / H16 / Stanier 337) (Ralstonia eutropha).